The following is a 454-amino-acid chain: GA-binding protein alpha chain (454 aa).

Residues 168 to 251 (AALEGYRKEQ…SHLELLRKYV (84 aa)) enclose the PNT domain. Residues 295–316 (KVQRSPRISGEDRSSPGNRTGN) form a disordered region. At Ser-303 the chain carries Phosphoserine. Residues 320 to 400 (IQLWQFLLEL…QGKRFVYKFV (81 aa)) constitute a DNA-binding region (ETS).

Belongs to the ETS family. As to quaternary structure, heterotetramer of two alpha and two beta subunits. As to expression, ubiquitous.

The protein localises to the nucleus. Functionally, transcription factor capable of interacting with purine rich repeats (GA repeats). Positively regulates transcription of transcriptional repressor Rhit/Zpf13. The chain is GA-binding protein alpha chain (Gabpa) from Mus musculus (Mouse).